The primary structure comprises 82 residues: ATP synthase subunit c (82 aa).

A run of 2 helical transmembrane segments spans residues 7 to 27 (AASV…PGIG) and 57 to 77 (LAFM…LLFA).

It belongs to the ATPase C chain family. In terms of assembly, F-type ATPases have 2 components, F(1) - the catalytic core - and F(0) - the membrane proton channel. F(1) has five subunits: alpha(3), beta(3), gamma(1), delta(1), epsilon(1). F(0) has four main subunits: a(1), b(1), b'(1) and c(10-14). The alpha and beta chains form an alternating ring which encloses part of the gamma chain. F(1) is attached to F(0) by a central stalk formed by the gamma and epsilon chains, while a peripheral stalk is formed by the delta, b and b' chains.

It is found in the cellular thylakoid membrane. Its function is as follows. F(1)F(0) ATP synthase produces ATP from ADP in the presence of a proton or sodium gradient. F-type ATPases consist of two structural domains, F(1) containing the extramembraneous catalytic core and F(0) containing the membrane proton channel, linked together by a central stalk and a peripheral stalk. During catalysis, ATP synthesis in the catalytic domain of F(1) is coupled via a rotary mechanism of the central stalk subunits to proton translocation. Key component of the F(0) channel; it plays a direct role in translocation across the membrane. A homomeric c-ring of between 10-14 subunits forms the central stalk rotor element with the F(1) delta and epsilon subunits. The sequence is that of ATP synthase subunit c from Synechococcus sp. (strain WH7803).